Here is a 633-residue protein sequence, read N- to C-terminus: Chaperone protein dnaK2 (633 aa).

The residue at position 197 (threonine 197) is a Phosphothreonine; by autocatalysis. Residues 600-633 (SNAASQAADGTSSESNNSTEGNDDVIDAEFTESK) are disordered. The segment covering 608–619 (DGTSSESNNSTE) has biased composition (low complexity). Acidic residues predominate over residues 620–633 (GNDDVIDAEFTESK).

Belongs to the heat shock protein 70 family.

In terms of biological role, acts as a chaperone. In Prochlorococcus marinus (strain SARG / CCMP1375 / SS120), this protein is Chaperone protein dnaK2 (dnaK2).